Here is a 236-residue protein sequence, read N- to C-terminus: Small ribosomal subunit protein uS2c (236 aa).

The protein belongs to the universal ribosomal protein uS2 family.

Its subcellular location is the plastid. It is found in the chloroplast. The chain is Small ribosomal subunit protein uS2c (rps2) from Carica papaya (Papaya).